Consider the following 77-residue polypeptide: UPF0349 protein lin2491 (77 aa).

It belongs to the UPF0349 family.

In Listeria innocua serovar 6a (strain ATCC BAA-680 / CLIP 11262), this protein is UPF0349 protein lin2491.